The chain runs to 432 residues: Protein RETICULATA, chloroplastic (432 aa).

The transit peptide at 1-47 (MAGCAMNLQFSSVVKVRNEISSFGICNRDFVFRDLAKAMKVPVLRIR) directs the protein to the chloroplast. The disordered stretch occupies residues 109–140 (GNVGDGFNGSDGNGGGGGGGNGGEGDGEGEDY). Residues 111–132 (VGDGFNGSDGNGGGGGGGNGGE) show a composition bias toward gly residues. A run of 2 helical transmembrane segments spans residues 249–269 (LYVA…GMLA) and 322–342 (IMYG…ANLI).

It belongs to the RETICULATA family. In terms of tissue distribution, highly expressed in the vasculature of developing leaf primordia, margins of fully expanded leaves, hydathodes of rosette of cauline leaves, basal region of the lamina, stipules, root tips, stamens and in the abscission zone of the funiculus.

The protein resides in the plastid. It localises to the chloroplast membrane. In terms of biological role, may play a role in leaf development. Required for leaf mesophyll cell division in the early stages of leaf organogenesis. Acts in a developmental pathway that involves PPT1/CUE1 but does not include ASE2/DOV1. The protein is Protein RETICULATA, chloroplastic of Arabidopsis thaliana (Mouse-ear cress).